The chain runs to 356 residues: tRNA N6-adenosine threonylcarbamoyltransferase (356 aa).

Fe cation is bound by residues histidine 115 and histidine 119. Residues 138-142 (LVSGG), aspartate 171, glycine 184, and asparagine 283 contribute to the substrate site. A Fe cation-binding site is contributed by aspartate 311.

The protein belongs to the KAE1 / TsaD family. The cofactor is Fe(2+).

It localises to the cytoplasm. It carries out the reaction L-threonylcarbamoyladenylate + adenosine(37) in tRNA = N(6)-L-threonylcarbamoyladenosine(37) in tRNA + AMP + H(+). Required for the formation of a threonylcarbamoyl group on adenosine at position 37 (t(6)A37) in tRNAs that read codons beginning with adenine. Is involved in the transfer of the threonylcarbamoyl moiety of threonylcarbamoyl-AMP (TC-AMP) to the N6 group of A37, together with TsaE and TsaB. TsaD likely plays a direct catalytic role in this reaction. The chain is tRNA N6-adenosine threonylcarbamoyltransferase from Prochlorococcus marinus (strain SARG / CCMP1375 / SS120).